A 175-amino-acid polypeptide reads, in one-letter code: Crossover junction endodeoxyribonuclease RuvC (175 aa).

Active-site residues include Asp7, Glu68, and Asp141. Mg(2+) is bound by residues Asp7, Glu68, and Asp141.

It belongs to the RuvC family. Homodimer which binds Holliday junction (HJ) DNA. The HJ becomes 2-fold symmetrical on binding to RuvC with unstacked arms; it has a different conformation from HJ DNA in complex with RuvA. In the full resolvosome a probable DNA-RuvA(4)-RuvB(12)-RuvC(2) complex forms which resolves the HJ. Mg(2+) is required as a cofactor.

The protein localises to the cytoplasm. The enzyme catalyses Endonucleolytic cleavage at a junction such as a reciprocal single-stranded crossover between two homologous DNA duplexes (Holliday junction).. Functionally, the RuvA-RuvB-RuvC complex processes Holliday junction (HJ) DNA during genetic recombination and DNA repair. Endonuclease that resolves HJ intermediates. Cleaves cruciform DNA by making single-stranded nicks across the HJ at symmetrical positions within the homologous arms, yielding a 5'-phosphate and a 3'-hydroxyl group; requires a central core of homology in the junction. The consensus cleavage sequence is 5'-(A/T)TT(C/G)-3'. Cleavage occurs on the 3'-side of the TT dinucleotide at the point of strand exchange. HJ branch migration catalyzed by RuvA-RuvB allows RuvC to scan DNA until it finds its consensus sequence, where it cleaves and resolves the cruciform DNA. The sequence is that of Crossover junction endodeoxyribonuclease RuvC from Salinispora arenicola (strain CNS-205).